The following is a 904-amino-acid chain: Protein translocase subunit SecA (904 aa).

Residues Gln87, 105–109, and Asp512 each bind ATP; that span reads GEGKT. The interval 851–870 is disordered; sequence LARQQQLSHQTDNSALMSEE. Cys888, Cys890, Cys899, and His900 together coordinate Zn(2+).

Belongs to the SecA family. In terms of assembly, monomer and homodimer. Part of the essential Sec protein translocation apparatus which comprises SecA, SecYEG and auxiliary proteins SecDF-YajC and YidC. Requires Zn(2+) as cofactor.

It is found in the cell inner membrane. It localises to the cytoplasm. It catalyses the reaction ATP + H2O + cellular proteinSide 1 = ADP + phosphate + cellular proteinSide 2.. Its function is as follows. Part of the Sec protein translocase complex. Interacts with the SecYEG preprotein conducting channel. Has a central role in coupling the hydrolysis of ATP to the transfer of proteins into and across the cell membrane, serving both as a receptor for the preprotein-SecB complex and as an ATP-driven molecular motor driving the stepwise translocation of polypeptide chains across the membrane. The chain is Protein translocase subunit SecA from Yersinia pseudotuberculosis serotype O:1b (strain IP 31758).